A 322-amino-acid polypeptide reads, in one-letter code: NADH oxidoreductase HCR (322 aa).

The FAD-binding FR-type domain maps to 7 to 107 (QCPWRMQVHH…SDAMGEFTCD (101 aa)). Positions 111–213 (EDKFLLLAAG…APYMDWVEQE (103 aa)) are oxidoreductase. The region spanning 237-322 (SGLKFTKLQP…CHPQGDLVLA (86 aa)) is the 2Fe-2S ferredoxin-type domain. Residues cysteine 273, cysteine 278, cysteine 281, and cysteine 311 each contribute to the [2Fe-2S] cluster site.

In the N-terminal section; belongs to the FAD-binding oxidoreductase type 6 family. The cofactor is [2Fe-2S] cluster. FAD is required as a cofactor.

Its function is as follows. NADH oxidoreductase acting in concert with HCP. The chain is NADH oxidoreductase HCR (hcr) from Escherichia coli (strain K12).